The primary structure comprises 418 residues: Serine hydroxymethyltransferase (418 aa).

(6S)-5,6,7,8-tetrahydrofolate-binding positions include Leu-121 and 125–127 (GHL). Lys-230 carries the N6-(pyridoxal phosphate)lysine modification. (6S)-5,6,7,8-tetrahydrofolate-binding positions include Glu-246 and 355 to 357 (SPF).

The protein belongs to the SHMT family. Homodimer. Pyridoxal 5'-phosphate serves as cofactor.

It localises to the cytoplasm. The enzyme catalyses (6R)-5,10-methylene-5,6,7,8-tetrahydrofolate + glycine + H2O = (6S)-5,6,7,8-tetrahydrofolate + L-serine. Its pathway is one-carbon metabolism; tetrahydrofolate interconversion. It functions in the pathway amino-acid biosynthesis; glycine biosynthesis; glycine from L-serine: step 1/1. Catalyzes the reversible interconversion of serine and glycine with tetrahydrofolate (THF) serving as the one-carbon carrier. This reaction serves as the major source of one-carbon groups required for the biosynthesis of purines, thymidylate, methionine, and other important biomolecules. Also exhibits THF-independent aldolase activity toward beta-hydroxyamino acids, producing glycine and aldehydes, via a retro-aldol mechanism. The protein is Serine hydroxymethyltransferase of Streptococcus pneumoniae serotype 4 (strain ATCC BAA-334 / TIGR4).